A 245-amino-acid chain; its full sequence is MGDTIIVIPARYGSTRLKAKVLEQLDGKSIVEHVWRAAKAAGEGKVLIATESPVIVEHCAKFGAQAVLTSEACQSGTDRIYEAVKNGSEDYVLNLQGDEPFVKPQTIKGVIKLLKKDSKIDIATACYPTFNDDIYKNPNAVKAVLTKDMRALYFSRSAIPYKRELTEETKKAPYYIHCGIYGYKKTALERFVNLPPSNLEKLEKLEQLRALEDGMVIKSILIEAAGPAIDTAEDLNEARKYIRNN.

This sequence belongs to the KdsB family.

It localises to the cytoplasm. It carries out the reaction 3-deoxy-alpha-D-manno-oct-2-ulosonate + CTP = CMP-3-deoxy-beta-D-manno-octulosonate + diphosphate. It functions in the pathway nucleotide-sugar biosynthesis; CMP-3-deoxy-D-manno-octulosonate biosynthesis; CMP-3-deoxy-D-manno-octulosonate from 3-deoxy-D-manno-octulosonate and CTP: step 1/1. Its pathway is bacterial outer membrane biogenesis; lipopolysaccharide biosynthesis. In terms of biological role, activates KDO (a required 8-carbon sugar) for incorporation into bacterial lipopolysaccharide in Gram-negative bacteria. The sequence is that of 3-deoxy-manno-octulosonate cytidylyltransferase from Elusimicrobium minutum (strain Pei191).